The sequence spans 299 residues: Probable adenylate kinase 7, mitochondrial (299 aa).

A mitochondrion-targeting transit peptide spans Met1–Arg25. Gly80–Ala85 is a binding site for ATP. The tract at residues Ser100–Val129 is NMP. Residues Arg106, Lys127–Val129, Gly157–Arg160, and Gln164 contribute to the AMP site. Residues Arg190 and Leu203–Phe204 contribute to the ATP site. An LID region spans residues Gly193 to Asp237.

This sequence belongs to the adenylate kinase family.

It is found in the mitochondrion. The catalysed reaction is AMP + ATP = 2 ADP. Catalyzes the reversible transfer of the terminal phosphate group between ATP and AMP. Plays an important role in cellular energy homeostasis and in adenine nucleotide metabolism. The polypeptide is Probable adenylate kinase 7, mitochondrial (Oryza sativa subsp. japonica (Rice)).